The following is a 1606-amino-acid chain: Fatty acid synthase apf5 (1606 aa).

Residues 142-218 (VPVSAILISL…ETLSTSHDGQ (77 aa)) enclose the Carrier domain. Ser177 carries the O-(pantetheine 4'-phosphoryl)serine modification. The Ketosynthase family 3 (KS3) domain occupies 996-1539 (KESLIEVALQ…QKGGQALLVH (544 aa)). Residues Cys1182, His1424, and His1465 each act as for beta-ketoacyl synthase activity in the active site.

Belongs to the thiolase-like superfamily. Fungal fatty acid synthetase subunit alpha family.

It catalyses the reaction a fatty acyl-[ACP] + malonyl-[ACP] + H(+) = a 3-oxoacyl-[ACP] + holo-[ACP] + CO2. It participates in secondary metabolite biosynthesis. Functionally, fatty acid synthase; part of the gene cluster that mediates the biosynthesis of the cyclic tetrapeptide apicidin F (APF). The non-ribosomal peptide synthetase apf1 incorporates four different amino acids to produce apicidin F: L-phenylalanine, D-pipecolic acid (D-pip), N-methoxy-L-tryptophan and L-2-aminooctanedioic acid. L-Phenylalanine is the only proteinogenic amino acid directly used by apf1. The 3 other apf1 substrates are non-proteinogenic and have to be modified by other enzymes of the cluster. Lysine is converted to delta-1-pyrroline-5-carboxylate (P5C) which is reduced to L-pipecolic acid (L-pip) by apf3. L-pip is epimerized to D-pip, probably by apf1 activity, prior to incorporation. L-Tryptophan is N-oxidyzed by one of the cytochrome P450 monooxygenases (apf7 or apf8), and further methylated at the hydroxy group by the O-methyltransferase apf6 to yield N-methoxy-L-tryptophan. The synthesis of the fourth apf1 substrate is more complex. The fatty acid synthase apf5 is involved in the synthesis of the octanoic acid backbone of L-2-aminooctanedioic acid by fixing one acetyl-CoA unit and three malonyl-CoA units. Then one of the cytochrome P450 monooxygenases (apf7 or apf8) may oxidize this backbone to 2-oxooctanoic acid. The aminotransferase apf4 is predicted to catalyze the exchange of the keto group with an amino group. The next step would be the oxidation of 2-aminooctanoic acid by one of the cytochrome P450 monooxygenases (apf7 or apf8). The last step is the oxidation of 2-amino-8-hydroxyoctanoic acid to 2-aminooctanedioic acid is catalyzed by the FAD-dependent monooxygenase apf9. This chain is Fatty acid synthase apf5, found in Gibberella fujikuroi (strain CBS 195.34 / IMI 58289 / NRRL A-6831) (Bakanae and foot rot disease fungus).